Reading from the N-terminus, the 458-residue chain is Methionine aminopeptidase 2-2 (458 aa).

Over residues 1–14 the composition is skewed to basic and acidic residues; it reads MGSKTPERDGHKGQ. Residues 1–93 are disordered; that stretch reads MGSKTPERDG…QSSPPRVPLS (93 aa). Basic residues predominate over residues 67–82; sequence QKKKRKSKKKGKKKAA. His-209 provides a ligand contact to substrate. Residues Asp-230, Asp-241, and His-310 each contribute to the a divalent metal cation site. Position 318 (His-318) interacts with substrate. Residues Glu-343 and Glu-439 each coordinate a divalent metal cation.

The protein belongs to the peptidase M24A family. Methionine aminopeptidase eukaryotic type 2 subfamily. Requires Co(2+) as cofactor. Zn(2+) serves as cofactor. The cofactor is Mn(2+). It depends on Fe(2+) as a cofactor.

The protein resides in the cytoplasm. It catalyses the reaction Release of N-terminal amino acids, preferentially methionine, from peptides and arylamides.. In terms of biological role, cotranslationally removes the N-terminal methionine from nascent proteins. The N-terminal methionine is often cleaved when the second residue in the primary sequence is small and uncharged (Met-Ala-, Cys, Gly, Pro, Ser, Thr, or Val). This Emericella nidulans (strain FGSC A4 / ATCC 38163 / CBS 112.46 / NRRL 194 / M139) (Aspergillus nidulans) protein is Methionine aminopeptidase 2-2.